A 227-amino-acid chain; its full sequence is MICOS complex subunit Mic19 (227 aa).

A lipid anchor (N-myristoyl glycine) is attached at Gly2. The residue at position 29 (Ser29) is a Phosphoserine. Positions 32 to 57 (VIDRMKESSPSGSKSQRYSSVYGASV) are disordered. The segment covering 39 to 50 (SSPSGSKSQRYS) has biased composition (polar residues). Tyr49 carries the post-translational modification Phosphotyrosine. Phosphoserine occurs at positions 50, 51, 56, and 58. The segment at 73 to 92 (EQAKKESEHQRRLKQARDLE) is disordered. Position 142 is an N6-acetyllysine (Lys142). In terms of domain architecture, CHCH spans 180 to 222 (HPVCADLQTKILQCYRQNTQQTLSCSALASQYMHCVNHAKQSM). 2 short sequence motifs (cx9C motif) span residues 183 to 193 (CADLQTKILQC) and 204 to 214 (CSALASQYMHC). Intrachain disulfides connect Cys183/Cys214 and Cys193/Cys204.

This sequence belongs to the MICOS complex subunit Mic19 family. Metazoan Mic19 subfamily. Component of the mitochondrial contact site and cristae organizing system (MICOS) complex, composed of at least MICOS10/MIC10, CHCHD3/MIC19, CHCHD6/MIC25, APOOL/MIC27, IMMT/MIC60, APOO/MIC23/MIC26 and MICOS13/MIC13. This complex was also known under the names MINOS or MitOS complex. The MICOS complex associates with mitochondrial outer membrane proteins SAMM50, MTX1 and MTX2 (together described as components of the mitochondrial outer membrane sorting assembly machinery (SAM) complex) and DNAJC11, mitochondrial inner membrane protein TMEM11 and with HSPA9. The MICOS and SAM complexes together with DNAJC11 are part of a large protein complex spanning both membranes termed the mitochondrial intermembrane space bridging (MIB) complex. Interacts with HSPA1A/HSPA1B and OPA1, preferentially with the soluble OPA1 form.

It is found in the mitochondrion inner membrane. The protein localises to the cytoplasm. It localises to the nucleus. The protein resides in the mitochondrion. Its function is as follows. Component of the MICOS complex, a large protein complex of the mitochondrial inner membrane that plays crucial roles in the maintenance of crista junctions, inner membrane architecture, and formation of contact sites to the outer membrane. Has also been shown to function as a transcription factor which binds to the BAG1 promoter and represses BAG1 transcription. Plays an important role in the maintenance of the MICOS complex stability and the mitochondrial cristae morphology. The protein is MICOS complex subunit Mic19 (Chchd3) of Mus musculus (Mouse).